The following is a 416-amino-acid chain: Multifunctional CCA protein (416 aa).

The ATP site is built by Gly8 and Arg11. CTP is bound by residues Gly8 and Arg11. Mg(2+)-binding residues include Asp21 and Asp23. 3 residues coordinate ATP: Arg91, Arg137, and Arg140. Arg91, Arg137, and Arg140 together coordinate CTP. One can recognise an HD domain in the interval 228–329 (TGVHTLMVLA…VKIFDKADFW (102 aa)).

Belongs to the tRNA nucleotidyltransferase/poly(A) polymerase family. Bacterial CCA-adding enzyme type 1 subfamily. In terms of assembly, monomer. Can also form homodimers and oligomers. Requires Mg(2+) as cofactor. It depends on Ni(2+) as a cofactor.

The catalysed reaction is a tRNA precursor + 2 CTP + ATP = a tRNA with a 3' CCA end + 3 diphosphate. The enzyme catalyses a tRNA with a 3' CCA end + 2 CTP + ATP = a tRNA with a 3' CCACCA end + 3 diphosphate. Catalyzes the addition and repair of the essential 3'-terminal CCA sequence in tRNAs without using a nucleic acid template. Adds these three nucleotides in the order of C, C, and A to the tRNA nucleotide-73, using CTP and ATP as substrates and producing inorganic pyrophosphate. tRNA 3'-terminal CCA addition is required both for tRNA processing and repair. Also involved in tRNA surveillance by mediating tandem CCA addition to generate a CCACCA at the 3' terminus of unstable tRNAs. While stable tRNAs receive only 3'-terminal CCA, unstable tRNAs are marked with CCACCA and rapidly degraded. The chain is Multifunctional CCA protein from Shewanella baltica (strain OS155 / ATCC BAA-1091).